The sequence spans 210 residues: GEM-like protein 7 (210 aa).

The 79-residue stretch at 88–166 (KIYKRLFKVC…CKINGVNQSQ (79 aa)) folds into the GRAM domain.

The protein belongs to the GEM family.

The chain is GEM-like protein 7 from Arabidopsis thaliana (Mouse-ear cress).